A 473-amino-acid polypeptide reads, in one-letter code: Glycine receptor subunit beta-type 4 (473 aa).

The N-terminal stretch at methionine 1–glycine 19 is a signal peptide. The Extracellular portion of the chain corresponds to glutamine 20–histidine 249. N-linked (GlcNAc...) asparagine glycosylation is found at asparagine 29, asparagine 105, and asparagine 151. Cysteines 166 and 180 form a disulfide. A helical membrane pass occupies residues histidine 250–leucine 271. The Cytoplasmic segment spans residues aspartate 272 to valine 276. The chain crosses the membrane as a helical span at residues proline 277–alanine 297. At arginine 298–lysine 308 the chain is on the extracellular side. The helical transmembrane segment at alanine 309–threonine 329 threads the bilayer. At valine 330–arginine 439 the chain is on the cytoplasmic side. The helical transmembrane segment at tyrosine 440 to tyrosine 460 threads the bilayer. Residues leucine 461–leucine 473 lie on the Extracellular side of the membrane.

It belongs to the ligand-gated ion channel (TC 1.A.9) family. Glycine receptor (TC 1.A.9.3) subfamily. As to quaternary structure, pentamer.

The protein localises to the postsynaptic cell membrane. It localises to the synapse. Its subcellular location is the cell membrane. Functionally, glycine receptors are ligand-gated chloride channels. Channel opening is triggered by extracellular glycine. Contributes to the generation of inhibitory postsynaptic currents. The sequence is that of Glycine receptor subunit beta-type 4 from Caenorhabditis elegans.